The sequence spans 809 residues: Cell division control protein 48 homolog A (809 aa).

Serine 2 carries the post-translational modification N-acetylserine. Serine 41 carries the phosphoserine modification. Residues glycine 210, 248–256, and histidine 387 contribute to the ADP site; that span reads GPPGSGKTL. 521–529 contributes to the ATP binding site; the sequence is GPPGCGKTL. The interval 782-809 is disordered; sequence AGSGATTGVADPFATSAAAAGDDDDLYN. A compositionally biased stretch (low complexity) spans 791–801; that stretch reads ADPFATSAAAA.

The protein belongs to the AAA ATPase family. As to quaternary structure, homohexamer. Interacts with SERK1, GRF6, KAPP and SYP31, but not with KNOLLE. Component of the SERK1 signaling complex, composed of KAPP, CDC48A, GRF6 or GRF7, SERK1, SERK2, SERK3/BAK1 and BRI1. Interacts with PUX1, PUX2, PUX3, PUX4, PUX5, PUX7 and PUX11 via its N-terminus. Post-translationally, phosphorylated on at least one threonine residue and on Ser-41 by SERK1.

Its subcellular location is the nucleus. It localises to the cytoplasm. The protein localises to the cytoskeleton. It is found in the phragmoplast. The protein resides in the cell membrane. Probably functions in cell division and growth processes. Interacts with certain SNAREs as part of specialized membrane fusion events where vesicles from the same organelle fuse (homotypic fusion). The sequence is that of Cell division control protein 48 homolog A (CDC48A) from Arabidopsis thaliana (Mouse-ear cress).